The chain runs to 84 residues: Serine protease inhibitor Kazal-type 2 (84 aa).

A signal peptide spans 1–23; that stretch reads MALSVLRLALLLLAVTFAASLIP. A Pyrrolidone carboxylic acid modification is found at glutamine 24. Residues 30-84 form the Kazal-like domain; sequence KYRTPNCSQYRLPGCPRHFNPVCGSDMSTYANECTLCMKIREGGHNIKIIRNGPC. 3 disulfide bridges follow: cysteine 36/cysteine 66, cysteine 44/cysteine 63, and cysteine 52/cysteine 84.

Expressed in epididymis (at protein level).

It is found in the secreted. The protein resides in the cytoplasmic vesicle. Its subcellular location is the secretory vesicle. The protein localises to the acrosome. Functionally, as a strong inhibitor of acrosin, it is required for normal spermiogenesis. It probably hinders premature activation of proacrosin and other proteases, thus preventing the cascade of events leading to spermiogenesis defects. May be involved in the regulation of serine protease-dependent germ cell apoptosis. It also inhibits trypsin. This Homo sapiens (Human) protein is Serine protease inhibitor Kazal-type 2 (SPINK2).